We begin with the raw amino-acid sequence, 229 residues long: HTH-type transcriptional regulator HbdR (229 aa).

The 61-residue stretch at 20–80 (EERRHQIISA…LTLKNVLDTY (61 aa)) folds into the HTH tetR-type domain. The segment at residues 43–62 (TILQIAREAKVSTGLIYQYF) is a DNA-binding region (H-T-H motif).

Homodimer in solution.

Activity is regulated by the effector molecules 3-hydroxybenzoyl-CoA and benzoyl-CoA, which bind to HbdR, alleviating its repression on the three target promoters and inducing the expression of the hbd genes. Its function is as follows. Transcriptional regulator that controls the expression of the hbd cluster, which contains three catabolic operons and is responsible for the anaerobic degradation of 3-hydroxybenzoate. HbdR suppresses the activity of the three catabolic promoters (PhbdN, PhbdE and PhbdH) by binding to a conserved palindromic operator box. In addition, it slightly increases activity of its own promoter (PhbdR). The HbdR-mediated repression of hbd genes may play a crucial biological role in maintaining requisite hydroxybenzoate levels in the cell. The sequence is that of HTH-type transcriptional regulator HbdR from Aromatoleum sp. (strain CIB) (Azoarcus sp. (strain CIB)).